The sequence spans 220 residues: Deoxyribose-phosphate aldolase 2 (220 aa).

The active-site Proton donor/acceptor is the Asp89. Catalysis depends on Lys151, which acts as the Schiff-base intermediate with acetaldehyde. Catalysis depends on Lys180, which acts as the Proton donor/acceptor.

The protein belongs to the DeoC/FbaB aldolase family. DeoC type 1 subfamily.

It localises to the cytoplasm. The catalysed reaction is 2-deoxy-D-ribose 5-phosphate = D-glyceraldehyde 3-phosphate + acetaldehyde. Its pathway is carbohydrate degradation; 2-deoxy-D-ribose 1-phosphate degradation; D-glyceraldehyde 3-phosphate and acetaldehyde from 2-deoxy-alpha-D-ribose 1-phosphate: step 2/2. Catalyzes a reversible aldol reaction between acetaldehyde and D-glyceraldehyde 3-phosphate to generate 2-deoxy-D-ribose 5-phosphate. This chain is Deoxyribose-phosphate aldolase 2, found in Staphylococcus aureus (strain N315).